The sequence spans 327 residues: MKTQTKVMGGHVLLTVFTLCMLCSAVRAQLSPDIYAKSCPNLLQIVRDQVKIALKAEIRMAASLIRLHFHDCFVNGCDASVLLDGTNSEKLAIPNVNSVRGFEVIDTIKAAVENACPGVVSCADILTLAARDSVYLSGGPQWRVALGRKDGLVANQSSANNLPSPFEPLDAIIAKFAAVGLNVTDVVALSGAHTFGQAKCDLFSNRLFNFTGAGTPDSTLETTLLSDLQTVCPIGGNGNKTAPLDRNSTDAFDNNYFKNLLEGKGLLSSDQILFSSDLAVNTTKRLVEAYSRSQYLFFRDFTCSMIRMGSLVNGASGEVRTNCRVIN.

An N-terminal signal peptide occupies residues 1 to 28; sequence MKTQTKVMGGHVLLTVFTLCMLCSAVRA. Gln29 is modified (pyrrolidone carboxylic acid). Disulfide bonds link Cys39/Cys116, Cys72/Cys77, Cys122/Cys323, and Cys200/Cys232. His70 (proton acceptor) is an active-site residue. Residues Asp71, Val74, Gly76, Asp78, and Ser80 each contribute to the Ca(2+) site. N-linked (GlcNAc...) asparagine glycosylation is present at Asn155. Pro163 contributes to the substrate binding site. N-linked (GlcNAc...) asparagine glycosylation occurs at Asn182. His193 is a binding site for heme b. Thr194 is a Ca(2+) binding site. N-linked (GlcNAc...) asparagine glycosylation is found at Asn209 and Asn239. Asp245 is a binding site for Ca(2+). An N-linked (GlcNAc...) asparagine glycan is attached at Asn247. Ser248 and Asp253 together coordinate Ca(2+). Asn281 is a glycosylation site (N-linked (GlcNAc...) asparagine).

This sequence belongs to the peroxidase family. Classical plant (class III) peroxidase subfamily. The cofactor is Ca(2+). Requires heme b as cofactor.

It is found in the secreted. It catalyses the reaction 2 a phenolic donor + H2O2 = 2 a phenolic radical donor + 2 H2O. Removal of H(2)O(2), oxidation of toxic reductants, biosynthesis and degradation of lignin, suberization, auxin catabolism, response to environmental stresses such as wounding, pathogen attack and oxidative stress. These functions might be dependent on each isozyme/isoform in each plant tissue. The chain is Peroxidase N (HRPN) from Armoracia rusticana (Horseradish).